Reading from the N-terminus, the 1042-residue chain is Putative type I restriction enzyme MjaIXP endonuclease subunit (1042 aa).

Positions 323–487 constitute a Helicase ATP-binding domain; the sequence is GETPEDRRIG…FLVFGDYISA (165 aa). The short motif at 439-442 is the DEAH box element; sequence DEAH. The 181-residue stretch at 551–731 folds into the Helicase C-terminal domain; the sequence is LTEDYLSKVS…DIKVVIEEMK (181 aa).

The protein belongs to the HsdR family. In terms of assembly, the type I restriction/modification system is composed of three polypeptides R, M and S.

The catalysed reaction is Endonucleolytic cleavage of DNA to give random double-stranded fragments with terminal 5'-phosphates, ATP is simultaneously hydrolyzed.. In terms of biological role, the restriction (R) subunit of a type I restriction enzyme that recognizes 5'-CCAN(5)GTR-3' and cleaves a random distance away. The R subunit is required for both nuclease and ATPase activities, but not for modification. After locating a non-methylated recognition site, the enzyme complex serves as a molecular motor that translocates DNA in an ATP-dependent manner until a collision occurs that triggers cleavage. The sequence is that of Putative type I restriction enzyme MjaIXP endonuclease subunit from Methanocaldococcus jannaschii (strain ATCC 43067 / DSM 2661 / JAL-1 / JCM 10045 / NBRC 100440) (Methanococcus jannaschii).